A 151-amino-acid polypeptide reads, in one-letter code: Ribosomal RNA large subunit methyltransferase H (151 aa).

S-adenosyl-L-methionine-binding positions include Leu-73, Gly-100, and 119 to 124; that span reads LTKLTL.

It belongs to the RNA methyltransferase RlmH family. In terms of assembly, homodimer.

Its subcellular location is the cytoplasm. The catalysed reaction is pseudouridine(1915) in 23S rRNA + S-adenosyl-L-methionine = N(3)-methylpseudouridine(1915) in 23S rRNA + S-adenosyl-L-homocysteine + H(+). In terms of biological role, specifically methylates the pseudouridine at position 1915 (m3Psi1915) in 23S rRNA. This chain is Ribosomal RNA large subunit methyltransferase H, found in Campylobacter hominis (strain ATCC BAA-381 / DSM 21671 / CCUG 45161 / LMG 19568 / NCTC 13146 / CH001A).